The chain runs to 203 residues: Large ribosomal subunit protein uL13 (203 aa).

Ala-2 bears the N-acetylalanine mark. Citrulline is present on Arg-59. Ser-77 carries the phosphoserine modification. Arg-140 carries the citrulline modification. The residue at position 191 (Lys-191) is an N6-acetyllysine.

It belongs to the universal ribosomal protein uL13 family. As to quaternary structure, component of the 60S ribosome. Component of the GAIT complex. Interacts with EIF4G1. In terms of processing, phosphorylation at Ser-77 upon interferon-gamma treatment in monocytes involves a DAPK1-DAPK3 kinase cascade and is causing release from the ribosome, association with the GAIT complex and subsequent involvement in transcript-selective translation inhibition. Post-translationally, citrullinated by PADI4.

It localises to the cytoplasm. In terms of biological role, associated with ribosomes but is not required for canonical ribosome function and has extra-ribosomal functions. Component of the GAIT (gamma interferon-activated inhibitor of translation) complex which mediates interferon-gamma-induced transcript-selective translation inhibition in inflammation processes. Upon interferon-gamma activation and subsequent phosphorylation dissociates from the ribosome and assembles into the GAIT complex which binds to stem loop-containing GAIT elements in the 3'-UTR of diverse inflammatory mRNAs (such as ceruplasmin) and suppresses their translation. In the GAIT complex interacts with m7G cap-bound eIF4G at or near the eIF3-binding site and blocks the recruitment of the 43S ribosomal complex. Involved in methylation of rRNA. The chain is Large ribosomal subunit protein uL13 (RPL13A) from Oryctolagus cuniculus (Rabbit).